A 367-amino-acid chain; its full sequence is Glutamate 5-kinase (367 aa).

Lys-8 lines the ATP pocket. Residues Ser-49, Asp-136, and Asn-148 each contribute to the substrate site. ATP contacts are provided by residues Thr-168–Asp-169 and Thr-210–Lys-216. The PUA domain maps to Ala-275–Ala-353.

This sequence belongs to the glutamate 5-kinase family.

The protein localises to the cytoplasm. The enzyme catalyses L-glutamate + ATP = L-glutamyl 5-phosphate + ADP. The protein operates within amino-acid biosynthesis; L-proline biosynthesis; L-glutamate 5-semialdehyde from L-glutamate: step 1/2. Catalyzes the transfer of a phosphate group to glutamate to form L-glutamate 5-phosphate. This Nostoc punctiforme (strain ATCC 29133 / PCC 73102) protein is Glutamate 5-kinase.